Here is a 163-residue protein sequence, read N- to C-terminus: Intron-encoded endonuclease I-PpoI (163 aa).

Homodimer. Requires Zn(2+) as cofactor.

Functionally, mediates the homing of a group I intron in the ribosomal DNA. Makes a four-base staggered cut in its ribosomal DNA target sequence. In Physarum polycephalum (Slime mold), this protein is Intron-encoded endonuclease I-PpoI.